Reading from the N-terminus, the 198-residue chain is Glycerol-3-phosphate acyltransferase (198 aa).

The next 5 helical transmembrane spans lie at 2-22 (IIDLIWIITSYVIGSIPFGVL), 53-73 (LGFITLFFDVLKGFFPVVIAT), 79-99 (PFMYTMTGLAAIIGHLYSCFL), 113-133 (VLIPIAFWQLLFAAILCTFFI), and 152-172 (IILFITGKFAYIPLSLIIMAL).

Belongs to the PlsY family. As to quaternary structure, probably interacts with PlsX.

The protein localises to the cell membrane. It carries out the reaction an acyl phosphate + sn-glycerol 3-phosphate = a 1-acyl-sn-glycero-3-phosphate + phosphate. It participates in lipid metabolism; phospholipid metabolism. Catalyzes the transfer of an acyl group from acyl-phosphate (acyl-PO(4)) to glycerol-3-phosphate (G3P) to form lysophosphatidic acid (LPA). This enzyme utilizes acyl-phosphate as fatty acyl donor, but not acyl-CoA or acyl-ACP. The polypeptide is Glycerol-3-phosphate acyltransferase (Lawsonia intracellularis (strain PHE/MN1-00)).